Here is a 212-residue protein sequence, read N- to C-terminus: Large ribosomal subunit protein uL3 (212 aa).

Glutamine 153 carries the N5-methylglutamine modification.

This sequence belongs to the universal ribosomal protein uL3 family. In terms of assembly, part of the 50S ribosomal subunit. Forms a cluster with proteins L14 and L19. In terms of processing, methylated by PrmB.

In terms of biological role, one of the primary rRNA binding proteins, it binds directly near the 3'-end of the 23S rRNA, where it nucleates assembly of the 50S subunit. This chain is Large ribosomal subunit protein uL3, found in Idiomarina loihiensis (strain ATCC BAA-735 / DSM 15497 / L2-TR).